The chain runs to 299 residues: Tyrosine recombinase XerC (299 aa).

Residues 1–81 enclose the Core-binding (CB) domain; that stretch reads MDEAIRRFIE…SWRQFYHWLQ (81 aa). The 180-residue stretch at 102–281 folds into the Tyr recombinase domain; sequence LLPKALPVDG…DFQHLAKVYD (180 aa). Catalysis depends on residues Arg-142, Lys-166, His-233, Arg-236, and His-259. Tyr-268 functions as the O-(3'-phospho-DNA)-tyrosine intermediate in the catalytic mechanism.

Belongs to the 'phage' integrase family. XerC subfamily. Forms a cyclic heterotetrameric complex composed of two molecules of XerC and two molecules of XerD.

It is found in the cytoplasm. In terms of biological role, site-specific tyrosine recombinase, which acts by catalyzing the cutting and rejoining of the recombining DNA molecules. The XerC-XerD complex is essential to convert dimers of the bacterial chromosome into monomers to permit their segregation at cell division. It also contributes to the segregational stability of plasmids. The chain is Tyrosine recombinase XerC from Chromobacterium violaceum (strain ATCC 12472 / DSM 30191 / JCM 1249 / CCUG 213 / NBRC 12614 / NCIMB 9131 / NCTC 9757 / MK).